Reading from the N-terminus, the 235-residue chain is MSDLSLLQCTNLSKRYQDGKLSTDVLRDVSFEMSSGEMMAIVGSSGSGKSTLLHVLGGLDTPTSGEVIFKGQPLSTLSAAAKADLRNRELGFIYQFHHLLPDFTALENVAMPLLIGKVPTSQAQDKAREMLAAVGLEARSHHRSSELSGGERQRVAIARALVNSPSLVLADEPTGNLDQRTADTIFELLGELNVRQGTAFLVVTHDLQLAGRLNRQLEMRDGQLQQELTLMGARQ.

In terms of domain architecture, ABC transporter spans 7–234 (LQCTNLSKRY…QQELTLMGAR (228 aa)). 43–50 (GSSGSGKS) provides a ligand contact to ATP.

Belongs to the ABC transporter superfamily. Lipoprotein translocase (TC 3.A.1.125) family. In terms of assembly, the complex is composed of two ATP-binding proteins (LolD) and two transmembrane proteins (LolC and LolE).

The protein localises to the cell inner membrane. In terms of biological role, part of the ABC transporter complex LolCDE involved in the translocation of mature outer membrane-directed lipoproteins, from the inner membrane to the periplasmic chaperone, LolA. Responsible for the formation of the LolA-lipoprotein complex in an ATP-dependent manner. In Pectobacterium atrosepticum (strain SCRI 1043 / ATCC BAA-672) (Erwinia carotovora subsp. atroseptica), this protein is Lipoprotein-releasing system ATP-binding protein LolD.